A 172-amino-acid chain; its full sequence is SsrA-binding protein (172 aa).

It belongs to the SmpB family.

The protein localises to the cytoplasm. Functionally, required for rescue of stalled ribosomes mediated by trans-translation. Binds to transfer-messenger RNA (tmRNA), required for stable association of tmRNA with ribosomes. tmRNA and SmpB together mimic tRNA shape, replacing the anticodon stem-loop with SmpB. tmRNA is encoded by the ssrA gene; the 2 termini fold to resemble tRNA(Ala) and it encodes a 'tag peptide', a short internal open reading frame. During trans-translation Ala-aminoacylated tmRNA acts like a tRNA, entering the A-site of stalled ribosomes, displacing the stalled mRNA. The ribosome then switches to translate the ORF on the tmRNA; the nascent peptide is terminated with the 'tag peptide' encoded by the tmRNA and targeted for degradation. The ribosome is freed to recommence translation, which seems to be the essential function of trans-translation. In Dehalococcoides mccartyi (strain ATCC BAA-2100 / JCM 16839 / KCTC 5957 / BAV1), this protein is SsrA-binding protein.